Reading from the N-terminus, the 312-residue chain is Olfactory receptor 5J2 (312 aa).

The Extracellular portion of the chain corresponds to 1–25; it reads MADDNFTVVTEFILLGLTDHAELKA. N-linked (GlcNAc...) asparagine glycosylation occurs at N5. Residues 26–46 traverse the membrane as a helical segment; that stretch reads VLFVVFLVIYAITLLRNLGMI. Over 47–54 the chain is Cytoplasmic; it reads LLIQITSK. The helical transmembrane segment at 55 to 75 threads the bilayer; the sequence is LHTPMYFLLSCLSFVDACYSS. The Extracellular segment spans residues 76-99; the sequence is AIAPKMLVNLLVVKATISFSACMV. The cysteines at positions 97 and 189 are disulfide-linked. Residues 100 to 120 traverse the membrane as a helical segment; sequence QHLCFGVFITTEGFLLSVMAY. Topologically, residues 121–139 are cytoplasmic; sequence DRYVAIVSPLLYTVAMSDR. The helical transmembrane segment at 140–160 threads the bilayer; that stretch reads KCVELVTGSWIGGIVNTLIHT. Residues 161-196 lie on the Extracellular side of the membrane; sequence ISLRRLSFCRLNAVSHFFCDIPSLLKLSCSDTSMNE. The helical transmembrane segment at 197–217 threads the bilayer; sequence LLLLTFSGVIAMATFLTVIIS. At 218-237 the chain is on the cytoplasmic side; it reads YIFIAFASLRIHSASGRQQA. Residues 238–258 form a helical membrane-spanning segment; that stretch reads FSTCASHLTAVTIFYGTLIFS. The Extracellular portion of the chain corresponds to 259–271; that stretch reads YIQPSSQYFVEQE. Residues 272–292 traverse the membrane as a helical segment; the sequence is KVVSMFYTLGIPMLNLLIHSL. At 293–312 the chain is on the cytoplasmic side; that stretch reads RNKDVKEAVKRAIEMKHFLC.

This sequence belongs to the G-protein coupled receptor 1 family.

It localises to the cell membrane. Odorant receptor. This chain is Olfactory receptor 5J2 (OR5J2), found in Homo sapiens (Human).